Reading from the N-terminus, the 352-residue chain is Molybdenum import ATP-binding protein ModC (352 aa).

The ABC transporter domain occupies 1 to 229 (MLELNFSQTL…SVMHPWLPKE (229 aa)). Position 31–38 (31–38 (GVSGAGKT)) interacts with ATP. The Mop domain maps to 289-352 (QTSIRNVLRA…AQVKSVSITA (64 aa)).

Belongs to the ABC transporter superfamily. Molybdate importer (TC 3.A.1.8) family. In terms of assembly, the complex is composed of two ATP-binding proteins (ModC), two transmembrane proteins (ModB) and a solute-binding protein (ModA).

The protein resides in the cell inner membrane. The enzyme catalyses molybdate(out) + ATP + H2O = molybdate(in) + ADP + phosphate + H(+). Its function is as follows. Part of the ABC transporter complex ModABC involved in molybdenum import. Responsible for energy coupling to the transport system. This Salmonella typhi protein is Molybdenum import ATP-binding protein ModC.